Reading from the N-terminus, the 503-residue chain is Maturase K (503 aa).

The protein belongs to the intron maturase 2 family. MatK subfamily.

The protein localises to the plastid. Its subcellular location is the chloroplast. Usually encoded in the trnK tRNA gene intron. Probably assists in splicing its own and other chloroplast group II introns. This Rosa gigantea (Giant tea rose) protein is Maturase K.